We begin with the raw amino-acid sequence, 170 residues long: Small ribosomal subunit protein uS13m (170 aa).

The interval Leu-130–Lys-170 is disordered. Basic residues-rich tracts occupy residues Lys-132–Lys-147 and Lys-155–Lys-170.

It belongs to the universal ribosomal protein uS13 family. As to quaternary structure, part of the small ribosomal subunit.

The protein localises to the mitochondrion. In terms of biological role, located at the top of the head of the small subunit, it contacts several helices of the small subunit rRNA. The sequence is that of Small ribosomal subunit protein uS13m (mrps13) from Dictyostelium citrinum (Slime mold).